A 211-amino-acid polypeptide reads, in one-letter code: Xanthine phosphoribosyltransferase (211 aa).

The xanthine site is built by Leu-31 and Asn-38. 138–142 (ANGRT) serves as a coordination point for 5-phospho-alpha-D-ribose 1-diphosphate. Lys-166 lines the xanthine pocket.

Belongs to the purine/pyrimidine phosphoribosyltransferase family. Xpt subfamily. Homodimer.

The protein resides in the cytoplasm. The enzyme catalyses XMP + diphosphate = xanthine + 5-phospho-alpha-D-ribose 1-diphosphate. The protein operates within purine metabolism; XMP biosynthesis via salvage pathway; XMP from xanthine: step 1/1. Functionally, converts the preformed base xanthine, a product of nucleic acid breakdown, to xanthosine 5'-monophosphate (XMP), so it can be reused for RNA or DNA synthesis. This is Xanthine phosphoribosyltransferase from Chloroflexus aurantiacus (strain ATCC 29364 / DSM 637 / Y-400-fl).